Here is a 308-residue protein sequence, read N- to C-terminus: MGALNQTRVTEFIFLGLTDNWVLEILFFVPFTVTYMLTLLGNFLIVVTIVFTPRLHNPMYFFLSNLSFIDICHSSVTVPKMLEGLLLERKTISFDNCIAQLFFLHLFACSEIFLLTIMAYDRYVAICIPLHYSNVMNMKVCVQLVFALWLGGTIHSLVQTFLTIRLPYCGPNIIDSYFCDVPPVIKLACTDTYLTGILIVSNSGTISLVCFLALVTSYTVILFSLRKQSAEGRRKALSTCSAHFMVVALFFGPCIFLYTRPDSSFSIDKVVSVFYTVVTPLLNPLIYTLRNEEVKTAMKHLRQRRICS.

Over 1–24 (MGALNQTRVTEFIFLGLTDNWVLE) the chain is Extracellular. N-linked (GlcNAc...) asparagine glycosylation occurs at asparagine 5. The chain crosses the membrane as a helical span at residues 25-45 (ILFFVPFTVTYMLTLLGNFLI). Topologically, residues 46-57 (VVTIVFTPRLHN) are cytoplasmic. Residues 58 to 78 (PMYFFLSNLSFIDICHSSVTV) traverse the membrane as a helical segment. Residues 79 to 97 (PKMLEGLLLERKTISFDNC) lie on the Extracellular side of the membrane. Cysteine 97 and cysteine 179 are oxidised to a cystine. A helical membrane pass occupies residues 98–118 (IAQLFFLHLFACSEIFLLTIM). The Cu cation site is built by histidine 105 and cysteine 109. The Cytoplasmic segment spans residues 119–143 (AYDRYVAICIPLHYSNVMNMKVCVQ). The helical transmembrane segment at 144 to 164 (LVFALWLGGTIHSLVQTFLTI) threads the bilayer. At 165–204 (RLPYCGPNIIDSYFCDVPPVIKLACTDTYLTGILIVSNSG) the chain is on the extracellular side. Residues 205–225 (TISLVCFLALVTSYTVILFSL) traverse the membrane as a helical segment. Residues 226 to 236 (RKQSAEGRRKA) are Cytoplasmic-facing. The chain crosses the membrane as a helical span at residues 237–257 (LSTCSAHFMVVALFFGPCIFL). Residues 258 to 268 (YTRPDSSFSID) lie on the Extracellular side of the membrane. Arginine 260 lines the Cu cation pocket. Residues 269–289 (KVVSVFYTVVTPLLNPLIYTL) form a helical membrane-spanning segment. Topologically, residues 290–308 (RNEEVKTAMKHLRQRRICS) are cytoplasmic.

It belongs to the G-protein coupled receptor 1 family. In terms of tissue distribution, expressed in olfactory epithelium, specifically in the olfactory sensory neurons of the septal organ.

The protein resides in the cell membrane. Copper binding enhances receptor activity in response to odorant binding. Olfactory receptor that is activated by the binding of organosulfur odorants with thioether groups such as (methylthio)methanethiol (MTMT) and bis(methylthiomethyl) disulfide. Also binds odorants cis-cyclooctene and tert-butyl mercaptan. The activity of this receptor is mediated by G proteins which activate adenylyl cyclase (Potential). In Mus musculus (Mouse), this protein is Olfactory receptor 4E2.